Reading from the N-terminus, the 282-residue chain is MAPQRSQDKTPIQLLHEYGIKISSAPKYELIHADGDAHQPSFMFSVTIGEVTCKGRGSTKKAAKHEAAEAALKLLKRDSQIIDQRDNNGLSPEAGEASNPVGILQELAMQRVWCLPEYVVFMETGPGHMKEFTIACRLEGLEETGSGSSKKLARRAAAENMIAKLQSLSGSSEITWSPPSRVYVESLRNSTGEKVSLLKRTPLSLPNTDYIQMLLEISLELGFQVTYIDIDELTVNGQYQCLVELSTRPVTVCHGSGVTSSNAHNAAAHNALQYIKMVASKH.

DRBM domains are found at residues 10–77, 99–167, and 209–277; these read TPIQ…LLKR, NPVG…KLQS, and DYIQ…YIKM.

This sequence belongs to the PRKRA family. In terms of assembly, homodimer. Interacts with dicer1 and eif2ak2/pkr. Also able to interact with dsRNA.

It is found in the cytoplasm. The protein resides in the perinuclear region. In terms of biological role, activates eif2ak2/pkr in the absence of double-stranded RNA (dsRNA), leading to phosphorylation of eif2s1/efi2-alpha and inhibition of translation and induction of apoptosis. Required for siRNA production by dicer1 and for subsequent siRNA-mediated post-transcriptional gene silencing. Does not seem to be required for processing of pre-miRNA to miRNA by dicer1. This Danio rerio (Zebrafish) protein is Interferon-inducible double-stranded RNA-dependent protein kinase activator A homolog (prkra).